A 452-amino-acid polypeptide reads, in one-letter code: Protein EARLY-RESPONSIVE TO DEHYDRATION 7, chloroplastic (452 aa).

A compositionally biased stretch (polar residues) spans 1-18; sequence MESSGDKQTSSLYPTVDT. The transit peptide at 1-28 directs the protein to the chloroplast; sequence MESSGDKQTSSLYPTVDTSNPEAPINPS. Residues 1-37 are disordered; it reads MESSGDKQTSSLYPTVDTSNPEAPINPSSSSSTNNLY. Residues 19 to 37 show a composition bias toward low complexity; sequence SNPEAPINPSSSSSTNNLY. A Senescence domain is found at 258 to 426; the sequence is IATGSGHLIK…AWVAFKIRKA (169 aa).

The protein resides in the plastid. Its subcellular location is the chloroplast. This chain is Protein EARLY-RESPONSIVE TO DEHYDRATION 7, chloroplastic, found in Arabidopsis thaliana (Mouse-ear cress).